A 456-amino-acid polypeptide reads, in one-letter code: MLNSAMSVVILAAGKGTRMYSDLPKVLHTLAGKAMVQHVIDAANELGASQVHLVYGHGGDLLKNTLKNDNLNWVLQAEQLGTGHAMQQAAPFFSDDEDILMLYGDVPLISVETLQRLRDAKPQGGIGLLTVKLDDPSGYGRITRENGKVTGIVEHKDATDEQRQIQEINTGILIANGADMKRWLAKLTNNNAQGEYYITDIIALAYQEGREIAAVHPDRLSEVEGVNNRLQLSRLERVYQSEQAEKLLLAGVMLRDPARFDLRGALTHGRDVEIDTNVIIKGNVTLGHRVKIGAGCVIKNSVIGDDCDISPYSVVEDAHLEAACTIGPFARLRPGAELREGAHVGNFVEMKKARLGKGSKAGHLSYLGDAEIGDNVNIGAGTITCNYDGANKFKTIIGDDVFVGSDTQLVAPVTVGKGATIAAGTTVTRDVADNELVLSRVPQVHKQGWQRPAKKK.

The interval 1–229 (MLNSAMSVVI…LSEVEGVNNR (229 aa)) is pyrophosphorylase. Residues 11-14 (LAAG), lysine 25, glutamine 76, 81-82 (GT), 103-105 (YGD), glycine 140, glutamate 154, asparagine 169, and asparagine 227 contribute to the UDP-N-acetyl-alpha-D-glucosamine site. Aspartate 105 lines the Mg(2+) pocket. Mg(2+) is bound at residue asparagine 227. Residues 230–250 (LQLSRLERVYQSEQAEKLLLA) are linker. The interval 251 to 456 (GVMLRDPARF…QGWQRPAKKK (206 aa)) is N-acetyltransferase. Arginine 333 and lysine 351 together coordinate UDP-N-acetyl-alpha-D-glucosamine. Histidine 363 (proton acceptor) is an active-site residue. Tyrosine 366 and asparagine 377 together coordinate UDP-N-acetyl-alpha-D-glucosamine. Acetyl-CoA is bound by residues alanine 380, 386–387 (NY), serine 405, alanine 423, and arginine 440.

The protein in the N-terminal section; belongs to the N-acetylglucosamine-1-phosphate uridyltransferase family. It in the C-terminal section; belongs to the transferase hexapeptide repeat family. Homotrimer. The cofactor is Mg(2+).

It localises to the cytoplasm. The enzyme catalyses alpha-D-glucosamine 1-phosphate + acetyl-CoA = N-acetyl-alpha-D-glucosamine 1-phosphate + CoA + H(+). It catalyses the reaction N-acetyl-alpha-D-glucosamine 1-phosphate + UTP + H(+) = UDP-N-acetyl-alpha-D-glucosamine + diphosphate. It functions in the pathway nucleotide-sugar biosynthesis; UDP-N-acetyl-alpha-D-glucosamine biosynthesis; N-acetyl-alpha-D-glucosamine 1-phosphate from alpha-D-glucosamine 6-phosphate (route II): step 2/2. The protein operates within nucleotide-sugar biosynthesis; UDP-N-acetyl-alpha-D-glucosamine biosynthesis; UDP-N-acetyl-alpha-D-glucosamine from N-acetyl-alpha-D-glucosamine 1-phosphate: step 1/1. Its pathway is bacterial outer membrane biogenesis; LPS lipid A biosynthesis. Functionally, catalyzes the last two sequential reactions in the de novo biosynthetic pathway for UDP-N-acetylglucosamine (UDP-GlcNAc). The C-terminal domain catalyzes the transfer of acetyl group from acetyl coenzyme A to glucosamine-1-phosphate (GlcN-1-P) to produce N-acetylglucosamine-1-phosphate (GlcNAc-1-P), which is converted into UDP-GlcNAc by the transfer of uridine 5-monophosphate (from uridine 5-triphosphate), a reaction catalyzed by the N-terminal domain. The sequence is that of Bifunctional protein GlmU from Citrobacter koseri (strain ATCC BAA-895 / CDC 4225-83 / SGSC4696).